Consider the following 525-residue polypeptide: Cytochrome P450 monooxygenase ltmJ (525 aa).

A helical membrane pass occupies residues 21-43 (LTWWQTIVSFIIFCIMCSWLPGN). Residue N136 is glycosylated (N-linked (GlcNAc...) asparagine). A heme-binding site is contributed by C465.

This sequence belongs to the cytochrome P450 family. Requires heme as cofactor.

The protein resides in the membrane. The protein operates within secondary metabolite biosynthesis. Functionally, cytochrome P450 monooxygenase; part of the gene clusters that mediates the biosynthesis of lolitrems, indole-diterpene mycotoxins that are potent tremorgens in mammals, and are synthesized by clavicipitaceous fungal endophytes in association with their grass hosts. The geranylgeranyl diphosphate (GGPP) synthase ltmG is proposed to catalyze the first step in lolitrem biosynthesis. LtmG catalyzes a series of iterative condensations of isopentenyl diphosphate (IPP) with dimethylallyl diphosphate (DMAPP), geranyl diphosphate (GPP), and farnesyl diphosphate (FPP), to form GGPP. GGPP then condenses with indole-3-glycerol phosphate to form 3-geranylgeranylindole, an acyclic intermediate, to be incorporated into paxilline. Either ltmG or ltmC could be responsible for this step, as both are putative prenyl transferases. The FAD-dependent monooxygenase ltmM then catalyzes the epoxidation of the two terminal alkenes of the geranylgeranyl moiety, which is subsequently cyclized by ltmB, to paspaline. The cytochrome P450 monooxygenases ltmQ and ltmP can sequentially oxidize paspaline to terpendole E and terpendole F. Alternatively, ltmP converts paspaline to an intermediate which is oxidized by ltmQ to terpendole F. LtmF, ltmK, ltmE and ltmJ appear to be unique to the epichloe endophytes. The prenyltransferase ltmF is involved in the 27-hydroxyl-O-prenylation. The cytochrome P450 monooxygenase ltmK is required for the oxidative acetal ring formation. The multi-functional prenyltransferase ltmE is required for C20- and C21-prenylations of the indole ring of paspalanes and acts together with the cytochrome P450 monooxygenase ltmJ to yield lolitremanes by multiple oxidations and ring closures. The stereoisomer pairs of lolitriol and lolitrem N or lolitrem B and lolitrem F may be attributed to variations in the way in which ring closure can occur under the action of ltmJ. While the major product of this pathway is lolitrem B, the prenyl transferases and cytochrome P450 monooxygenases identified in this pathway have a remarkable versatility in their regio- and stereo-specificities to generate a diverse range of metabolites that are products of a metabolic grid rather than a linear pathway. This Epichloe festucae var. lolii (Neotyphodium lolii) protein is Cytochrome P450 monooxygenase ltmJ (ltmJ).